Reading from the N-terminus, the 319-residue chain is ATP-dependent 6-phosphofructokinase (319 aa).

Gly-11 serves as a coordination point for ATP. Residue 21–25 (RAVVR) participates in ADP binding. Residues 72–73 (RS) and 102–105 (GDGS) contribute to the ATP site. A Mg(2+)-binding site is contributed by Asp-103. 125–127 (TID) contributes to the substrate binding site. Asp-127 (proton acceptor) is an active-site residue. Arg-154 serves as a coordination point for ADP. Residues Arg-162 and 169–171 (MGR) each bind substrate. Residues 185 to 187 (GAE) and 213 to 215 (KMH) contribute to the ADP site. Substrate-binding positions include Glu-222, Arg-243, and 249–252 (HIQR).

The protein belongs to the phosphofructokinase type A (PFKA) family. ATP-dependent PFK group I subfamily. Prokaryotic clade 'B1' sub-subfamily. As to quaternary structure, homotetramer. Requires Mg(2+) as cofactor.

It localises to the cytoplasm. The enzyme catalyses beta-D-fructose 6-phosphate + ATP = beta-D-fructose 1,6-bisphosphate + ADP + H(+). It functions in the pathway carbohydrate degradation; glycolysis; D-glyceraldehyde 3-phosphate and glycerone phosphate from D-glucose: step 3/4. Allosterically activated by ADP and other diphosphonucleosides, and allosterically inhibited by phosphoenolpyruvate. Its function is as follows. Catalyzes the phosphorylation of D-fructose 6-phosphate to fructose 1,6-bisphosphate by ATP, the first committing step of glycolysis. The polypeptide is ATP-dependent 6-phosphofructokinase (Clostridium tetani (strain Massachusetts / E88)).